Here is a 98-residue protein sequence, read N- to C-terminus: Co-chaperonin GroES (98 aa).

It belongs to the GroES chaperonin family. Heptamer of 7 subunits arranged in a ring. Interacts with the chaperonin GroEL.

The protein resides in the cytoplasm. In terms of biological role, together with the chaperonin GroEL, plays an essential role in assisting protein folding. The GroEL-GroES system forms a nano-cage that allows encapsulation of the non-native substrate proteins and provides a physical environment optimized to promote and accelerate protein folding. GroES binds to the apical surface of the GroEL ring, thereby capping the opening of the GroEL channel. The sequence is that of Co-chaperonin GroES from Bartonella bacilliformis (strain ATCC 35685 / KC583 / Herrer 020/F12,63).